A 179-amino-acid polypeptide reads, in one-letter code: Large ribosomal subunit protein bL17 (179 aa).

The segment at 127 to 179 (TDTLPDTVIDTGPDSAPDPVPGSEPGSAAGDLPDADTAPADPGESSSNQRVIR) is disordered. Positions 154-168 (AAGDLPDADTAPADP) are enriched in low complexity. Residues 170-179 (ESSSNQRVIR) show a composition bias toward polar residues.

It belongs to the bacterial ribosomal protein bL17 family. As to quaternary structure, part of the 50S ribosomal subunit. Contacts protein L32.

This chain is Large ribosomal subunit protein bL17, found in Tropheryma whipplei (strain TW08/27) (Whipple's bacillus).